The following is a 94-amino-acid chain: Cell division protein FtsB (94 aa).

Topologically, residues 1–3 (MRW) are cytoplasmic. The helical transmembrane segment at 4 to 21 (LTVGLLAAIGLLQYPLWV) threads the bilayer. Topologically, residues 22 to 94 (GKGGWLKVWE…VQIPEKVPGK (73 aa)) are periplasmic. Residues 31 to 73 (EYDRQLQQQKEVTRKLEIRNAGLDAEVRDLKQGYDAIEERARF) adopt a coiled-coil conformation.

This sequence belongs to the FtsB family. As to quaternary structure, part of a complex composed of FtsB, FtsL and FtsQ.

The protein resides in the cell inner membrane. Its function is as follows. Essential cell division protein. May link together the upstream cell division proteins, which are predominantly cytoplasmic, with the downstream cell division proteins, which are predominantly periplasmic. This is Cell division protein FtsB from Dechloromonas aromatica (strain RCB).